A 1529-amino-acid chain; its full sequence is Protein STU1 (1529 aa).

4 disordered regions span residues 266–314 (SMGR…DEQI), 617–638 (KPRT…ARKA), 651–745 (KELR…SQGI), and 1070–1090 (SAND…TSPI). Low complexity predominate over residues 273 to 290 (TISSNSSTPASLSSSTMS). Polar residues-rich tracts occupy residues 295 to 308 (RTNF…ISPS) and 619 to 634 (RTIT…SSLT). The span at 660 to 674 (TSISRPSSRINSTSS) shows a compositional bias: low complexity. Polar residues predominate over residues 708-723 (TPSTSSLSRVESNQDA).

The protein belongs to the CLASP family. In terms of assembly, interacts with microtubules.

Its subcellular location is the cytoplasm. It localises to the cytoskeleton. The protein resides in the nucleus. The protein localises to the spindle. Its function is as follows. Microtubule binding protein that promotes the stabilization of dynamic microtubules. Required for mitotic spindle formation. This is Protein STU1 (STU1) from Debaryomyces hansenii (strain ATCC 36239 / CBS 767 / BCRC 21394 / JCM 1990 / NBRC 0083 / IGC 2968) (Yeast).